The following is a 423-amino-acid chain: Imidazolonepropionase (423 aa).

2 residues coordinate Fe(3+): His-80 and His-82. Residues His-80 and His-82 each contribute to the Zn(2+) site. 4-imidazolone-5-propanoate is bound by residues Arg-89, Tyr-152, and His-185. Tyr-152 serves as a coordination point for N-formimidoyl-L-glutamate. His-250 lines the Fe(3+) pocket. His-250 is a binding site for Zn(2+). Residue Gln-253 coordinates 4-imidazolone-5-propanoate. Asp-325 is a binding site for Fe(3+). Asp-325 contributes to the Zn(2+) binding site. N-formimidoyl-L-glutamate-binding residues include Asn-327 and Gly-329. Thr-330 is a binding site for 4-imidazolone-5-propanoate.

Belongs to the metallo-dependent hydrolases superfamily. HutI family. Zn(2+) is required as a cofactor. Requires Fe(3+) as cofactor.

Its subcellular location is the cytoplasm. It catalyses the reaction 4-imidazolone-5-propanoate + H2O = N-formimidoyl-L-glutamate. The protein operates within amino-acid degradation; L-histidine degradation into L-glutamate; N-formimidoyl-L-glutamate from L-histidine: step 3/3. Catalyzes the hydrolytic cleavage of the carbon-nitrogen bond in imidazolone-5-propanoate to yield N-formimidoyl-L-glutamate. It is the third step in the universal histidine degradation pathway. In Cupriavidus pinatubonensis (strain JMP 134 / LMG 1197) (Cupriavidus necator (strain JMP 134)), this protein is Imidazolonepropionase.